The following is a 60-amino-acid chain: uncharacterized protein (60 aa).

The helical transmembrane segment at 27 to 49 (YYWLVSTARMVLGVTILILILIG) threads the bilayer.

It is found in the membrane. This is an uncharacterized protein from Archaeoglobus fulgidus (strain ATCC 49558 / DSM 4304 / JCM 9628 / NBRC 100126 / VC-16).